A 655-amino-acid chain; its full sequence is MSVRNIFADESHDIYTVRTHADGPDGELPLTAEMLINRPSGDLFGMTMNAGMGWSPDELDRDGILLLSTLGGLRGADGKPVALALHQGHYELDIQMKAAAEVIKANHALPYAVYVSDPCDGRTQGTTGMFDSLPYRNDASMVMRRLIRSLPDAKAVIGVASCDKGLPATMMALAAQHNIATVLVPGGATLPAKDGEDNGKVQTIGARFANGELSLQDARRAGCKACASSGGGCQFLGTAGTSQVVAEGLGLAIPHSALAPSGEPVWREIARASARAALNLSQKGITTREILTDKAIENAMTVHAAFGGSTNLLLHIPAIAHQAGCHIPTVDDWIRINKRVPRLVSVLPNGPVYHPTVNAFMAGGVPEVMLHLRSLGLLHEDVMTVTGSTLKENLDWWEHSERRQRFKQLLLDQEQINADEVIMSPQQAKARGLTSTITFPVGNIAPEGSVIKSTAIDPSMIDEQGIYYHKGVAKVYLSEKSAIYDIKHDKIKAGDILVIIGVGPSGTGMEETYQVTSALKHLSYGKHVSLITDARFSGVSTGACIGHVGPEALAGGPIGKLRTGDLIEIKIDCRELHGEVNFLGTRSDEQLPSQEEATAILNARPSHQDLLPDPELPDDTRLWAMLQAVSGGTWTGCIYDVNKIGAALRDFMNKN.

This sequence belongs to the IlvD/Edd family.

It catalyses the reaction D-xylonate = 2-dehydro-3-deoxy-D-arabinonate + H2O. Activity is increased in the presence of Mn(+) and Mg(2+). Inhibited by thiol compounds. Catalyzes the dehydration of D-xylonic acid to form 2-dehydro-3-deoxy-D-pentonate. The sequence is that of D-xylonate dehydratase YjhG (yjhG) from Escherichia coli (strain K12).